The following is a 408-amino-acid chain: UDP-N-acetylglucosamine--dolichyl-phosphate N-acetylglucosaminephosphotransferase (408 aa).

2 helical membrane-spanning segments follow: residues 6–26 (SLLG…IYLP) and 32–52 (WIIV…YKLI). UDP-N-acetyl-alpha-D-glucosamine is bound by residues D68 and E84. 2 helical membrane-spanning segments follow: residues 87 to 107 (GICV…FQWF) and 120 to 140 (AALT…VLNL). K145 lines the dolichyl phosphate pocket. 2 consecutive transmembrane segments (helical) span residues 147-167 (ILPM…TTVV) and 181-201 (LGVV…LAIF). 200–208 (IFCTNSINI) is a dolichyl phosphate binding site. N207 is a Mg(2+) binding site. Residue N213 coordinates UDP-N-acetyl-alpha-D-glucosamine. A run of 2 helical transmembrane segments spans residues 221–241 (VVIA…ASSV) and 258–278 (HLFS…LLFY). Residue D289 coordinates Mg(2+). The chain crosses the membrane as a helical span at residues 297-317 (MCFAVVAILCHFSKTLLLFFI). Residue 338-340 (RHR) coordinates UDP-N-acetyl-alpha-D-glucosamine. 2 helical membrane passes run 351-371 (MEAI…TGPL) and 376-396 (LCVY…GIRY).

The protein belongs to the glycosyltransferase 4 family. In terms of assembly, homodimer. It depends on Mg(2+) as a cofactor.

Its subcellular location is the endoplasmic reticulum membrane. The catalysed reaction is a di-trans,poly-cis-dolichyl phosphate + UDP-N-acetyl-alpha-D-glucosamine = an N-acetyl-alpha-D-glucosaminyl-diphospho-di-trans,poly-cis-dolichol + UMP. The protein operates within protein modification; protein glycosylation. Its activity is regulated as follows. Inhibited by natural nucleoside antibiotic tunicamycin, which acts as a structural analog and competitor of UDP-GlcNAc. In terms of biological role, UDP-N-acetylglucosamine--dolichyl-phosphate N-acetylglucosaminephosphotransferase that operates in the biosynthetic pathway of dolichol-linked oligosaccharides, the glycan precursors employed in protein asparagine (N)-glycosylation. The assembly of dolichol-linked oligosaccharides begins on the cytosolic side of the endoplasmic reticulum membrane and finishes in its lumen. The sequential addition of sugars to dolichol pyrophosphate produces dolichol-linked oligosaccharides containing fourteen sugars, including two GlcNAcs, nine mannoses and three glucoses. Once assembled, the oligosaccharide is transferred from the lipid to nascent proteins by oligosaccharyltransferases. Catalyzes the initial step of dolichol-linked oligosaccharide biosynthesis, transfering GlcNAc-1-P from cytosolic UDP-GlcNAc onto the carrier lipid dolichyl phosphate (P-dolichol), yielding GlcNAc-P-P-dolichol embedded in the cytoplasmic leaflet of the endoplasmic reticulum membrane. In Dictyostelium discoideum (Social amoeba), this protein is UDP-N-acetylglucosamine--dolichyl-phosphate N-acetylglucosaminephosphotransferase (alg7).